The sequence spans 831 residues: Probable glucan 1,3-beta-glucosidase D (831 aa).

Composition is skewed to basic and acidic residues over residues 1-24, 44-56, 79-93, 102-115, 137-151, and 198-213; these read MPSH…YREV, RRDD…RSHE, RSHD…RSRA, SRRD…EYRR, RDGQ…DREA, and QRER…LESK. Disordered stretches follow at residues 1–179 and 192–241; these read MPSH…SGSH and HYDE…GQSK. Residues 1 to 297 are Cytoplasmic-facing; sequence MPSHSRSRDR…AQPPFWKRKK (297 aa). Residues 298–318 traverse the membrane as a helical; Signal-anchor for type II membrane protein segment; that stretch reads WWIVIGVLVVVLAIVIPVAVV. The Extracellular portion of the chain corresponds to 319–831; that stretch reads MSKKHGHDDD…PSFGDLPEYY (513 aa). N-linked (GlcNAc...) asparagine glycans are attached at residues asparagine 376, asparagine 381, asparagine 393, asparagine 410, asparagine 442, asparagine 546, and asparagine 558. The active-site Proton donor is glutamate 597. Asparagine 610, asparagine 636, asparagine 669, and asparagine 689 each carry an N-linked (GlcNAc...) asparagine glycan. Glutamate 702 acts as the Nucleophile in catalysis.

Belongs to the glycosyl hydrolase 5 (cellulase A) family.

It is found in the cell membrane. The enzyme catalyses Successive hydrolysis of beta-D-glucose units from the non-reducing ends of (1-&gt;3)-beta-D-glucans, releasing alpha-glucose.. Glucosidase involved in the degradation of cellulosic biomass. Active on lichenan. The polypeptide is Probable glucan 1,3-beta-glucosidase D (exgD) (Aspergillus flavus (strain ATCC 200026 / FGSC A1120 / IAM 13836 / NRRL 3357 / JCM 12722 / SRRC 167)).